A 471-amino-acid chain; its full sequence is ATP synthase subunit beta (471 aa).

Gly157–Thr164 contacts ATP.

It belongs to the ATPase alpha/beta chains family. As to quaternary structure, F-type ATPases have 2 components, CF(1) - the catalytic core - and CF(0) - the membrane proton channel. CF(1) has five subunits: alpha(3), beta(3), gamma(1), delta(1), epsilon(1). CF(0) has three main subunits: a(1), b(2) and c(9-12). The alpha and beta chains form an alternating ring which encloses part of the gamma chain. CF(1) is attached to CF(0) by a central stalk formed by the gamma and epsilon chains, while a peripheral stalk is formed by the delta and b chains.

The protein localises to the cell inner membrane. The enzyme catalyses ATP + H2O + 4 H(+)(in) = ADP + phosphate + 5 H(+)(out). Its function is as follows. Produces ATP from ADP in the presence of a proton gradient across the membrane. The catalytic sites are hosted primarily by the beta subunits. In Trichlorobacter lovleyi (strain ATCC BAA-1151 / DSM 17278 / SZ) (Geobacter lovleyi), this protein is ATP synthase subunit beta.